The sequence spans 639 residues: Collagen alpha-1(XII) chain (639 aa).

The 114-residue stretch at 1–114 folds into the VWFA domain; the sequence is CRKSLLQAVA…DSLSKIVDDL (114 aa). 6 Fibronectin type-III domains span residues 130–219, 220–310, 311–401, 402–490, 491–585, and 586–639; these read APSN…LPVP, IVSL…LPLP, RPQD…VPAP, TNLR…SPKS, GPRN…TVRN, and LRVY…LRNL. The segment at 473–496 is disordered; sequence DESESDDLTGSERTSPKSGPRNLQ.

It belongs to the fibril-associated collagens with interrupted helices (FACIT) family. As to quaternary structure, trimer of identical chains each containing 190 kDa of non-triple-helical sequences. Post-translationally, the triple-helical tail is stabilized by disulfide bonds at each end. In terms of processing, prolines at the third position of the tripeptide repeating unit (G-X-Y) are hydroxylated in some or all of the chains. O-glycosylated; glycosaminoglycan of chondroitin-sulfate type.

Its subcellular location is the secreted. It is found in the extracellular space. The protein localises to the extracellular matrix. Type XII collagen interacts with type I collagen-containing fibrils, the COL1 domain could be associated with the surface of the fibrils, and the COL2 and NC3 domains may be localized in the perifibrillar matrix. The polypeptide is Collagen alpha-1(XII) chain (COL12A1) (Oryctolagus cuniculus (Rabbit)).